Consider the following 301-residue polypeptide: Acetyl-coenzyme A carboxylase carboxyl transferase subunit beta (301 aa).

One can recognise a CoA carboxyltransferase N-terminal domain in the interval 25–294 (LWIKDPSTGE…NSDAPAPQKP (270 aa)).

Belongs to the AccD/PCCB family. In terms of assembly, acetyl-CoA carboxylase is a heterohexamer composed of biotin carboxyl carrier protein (AccB), biotin carboxylase (AccC) and two subunits each of ACCase subunit alpha (AccA) and ACCase subunit beta (AccD).

The protein resides in the cytoplasm. The enzyme catalyses N(6)-carboxybiotinyl-L-lysyl-[protein] + acetyl-CoA = N(6)-biotinyl-L-lysyl-[protein] + malonyl-CoA. It functions in the pathway lipid metabolism; malonyl-CoA biosynthesis; malonyl-CoA from acetyl-CoA: step 1/1. Its function is as follows. Component of the acetyl coenzyme A carboxylase (ACC) complex. Biotin carboxylase (BC) catalyzes the carboxylation of biotin on its carrier protein (BCCP) and then the CO(2) group is transferred by the transcarboxylase to acetyl-CoA to form malonyl-CoA. The chain is Acetyl-coenzyme A carboxylase carboxyl transferase subunit beta from Brucella canis (strain ATCC 23365 / NCTC 10854 / RM-666).